We begin with the raw amino-acid sequence, 126 residues long: Large ribosomal subunit protein bL20 (126 aa).

It belongs to the bacterial ribosomal protein bL20 family.

In terms of biological role, binds directly to 23S ribosomal RNA and is necessary for the in vitro assembly process of the 50S ribosomal subunit. It is not involved in the protein synthesizing functions of that subunit. The chain is Large ribosomal subunit protein bL20 from Acholeplasma laidlawii (strain PG-8A).